The chain runs to 513 residues: 2,3-bisphosphoglycerate-independent phosphoglycerate mutase (513 aa).

Mn(2+)-binding residues include Asp-13 and Ser-63. Ser-63 functions as the Phosphoserine intermediate in the catalytic mechanism. Substrate is bound by residues His-124, 154–155, Arg-186, Arg-192, 262–265, and Lys-335; these read RD and RADR. The Mn(2+) site is built by Asp-402, His-406, Asp-443, His-444, and His-462.

Belongs to the BPG-independent phosphoglycerate mutase family. In terms of assembly, monomer. Mn(2+) serves as cofactor.

It carries out the reaction (2R)-2-phosphoglycerate = (2R)-3-phosphoglycerate. It functions in the pathway carbohydrate degradation; glycolysis; pyruvate from D-glyceraldehyde 3-phosphate: step 3/5. Its function is as follows. Catalyzes the interconversion of 2-phosphoglycerate and 3-phosphoglycerate. The sequence is that of 2,3-bisphosphoglycerate-independent phosphoglycerate mutase from Shewanella frigidimarina (strain NCIMB 400).